Here is a 553-residue protein sequence, read N- to C-terminus: Serine/threonine-protein phosphatase 2B catalytic subunit A1 (553 aa).

Position 2 is an N-acetylserine (serine 2). 3 residues coordinate Fe cation: aspartate 119, histidine 121, and aspartate 147. Zn(2+) is bound by residues aspartate 147 and asparagine 179. Histidine 180 functions as the Proton donor in the catalytic mechanism. Histidine 228 and histidine 317 together coordinate Zn(2+). Residues 413-447 are disordered; the sequence is LDPESEPKAAEETVKARANATKETGTPSDEKASSA. Positions 417–427 are enriched in basic and acidic residues; the sequence is SEPKAAEETVK.

It belongs to the PPP phosphatase family. PP-2B subfamily. As to quaternary structure, composed of two components (A and B), the A component is the catalytic subunit and the B component confers calcium sensitivity. It depends on Fe(3+) as a cofactor. Zn(2+) is required as a cofactor.

The catalysed reaction is O-phospho-L-seryl-[protein] + H2O = L-seryl-[protein] + phosphate. It catalyses the reaction O-phospho-L-threonyl-[protein] + H2O = L-threonyl-[protein] + phosphate. Functionally, calcium-dependent, calmodulin-stimulated protein phosphatase. This subunit may have a role in the calmodulin activation of calcineurin. This chain is Serine/threonine-protein phosphatase 2B catalytic subunit A1 (CNA1), found in Saccharomyces cerevisiae (strain ATCC 204508 / S288c) (Baker's yeast).